The chain runs to 412 residues: Multifunctional CCA protein (412 aa).

ATP contacts are provided by G8 and R11. The CTP site is built by G8 and R11. Residues D21 and D23 each coordinate Mg(2+). 3 residues coordinate ATP: R91, R137, and R140. Positions 91, 137, and 140 each coordinate CTP. The HD domain maps to 228-329 (TGIHTLMTLS…VKLFDSIDAW (102 aa)).

The protein belongs to the tRNA nucleotidyltransferase/poly(A) polymerase family. Bacterial CCA-adding enzyme type 1 subfamily. In terms of assembly, monomer. Can also form homodimers and oligomers. The cofactor is Mg(2+). It depends on Ni(2+) as a cofactor.

It catalyses the reaction a tRNA precursor + 2 CTP + ATP = a tRNA with a 3' CCA end + 3 diphosphate. The enzyme catalyses a tRNA with a 3' CCA end + 2 CTP + ATP = a tRNA with a 3' CCACCA end + 3 diphosphate. Functionally, catalyzes the addition and repair of the essential 3'-terminal CCA sequence in tRNAs without using a nucleic acid template. Adds these three nucleotides in the order of C, C, and A to the tRNA nucleotide-73, using CTP and ATP as substrates and producing inorganic pyrophosphate. tRNA 3'-terminal CCA addition is required both for tRNA processing and repair. Also involved in tRNA surveillance by mediating tandem CCA addition to generate a CCACCA at the 3' terminus of unstable tRNAs. While stable tRNAs receive only 3'-terminal CCA, unstable tRNAs are marked with CCACCA and rapidly degraded. This chain is Multifunctional CCA protein, found in Escherichia coli O7:K1 (strain IAI39 / ExPEC).